The chain runs to 531 residues: Isocitrate lyase (531 aa).

A substrate-binding site is contributed by 101–103 (SGW). Asp-184 is a Mg(2+) binding site. Cys-222 acts as the Proton acceptor in catalysis. Substrate contacts are provided by residues 223-224 (GH), 380-384 (NNSPS), and Thr-451.

Belongs to the isocitrate lyase/PEP mutase superfamily. Isocitrate lyase family. Homotetramer. Requires Mg(2+) as cofactor.

It catalyses the reaction D-threo-isocitrate = glyoxylate + succinate. Its pathway is carbohydrate metabolism; glyoxylate cycle; (S)-malate from isocitrate: step 1/2. Functionally, involved in the metabolic adaptation in response to environmental changes. Catalyzes the reversible formation of succinate and glyoxylate from isocitrate, a key step of the glyoxylate cycle, which operates as an anaplerotic route for replenishing the tricarboxylic acid cycle during growth on fatty acid substrates. The sequence is that of Isocitrate lyase from Pseudomonas aeruginosa (strain ATCC 15692 / DSM 22644 / CIP 104116 / JCM 14847 / LMG 12228 / 1C / PRS 101 / PAO1).